Here is a 507-residue protein sequence, read N- to C-terminus: ATP synthase subunit alpha, chloroplastic (507 aa).

An ATP-binding site is contributed by 170–177; the sequence is GDRQTGKT.

The protein belongs to the ATPase alpha/beta chains family. In terms of assembly, F-type ATPases have 2 components, CF(1) - the catalytic core - and CF(0) - the membrane proton channel. CF(1) has five subunits: alpha(3), beta(3), gamma(1), delta(1), epsilon(1). CF(0) has four main subunits: a, b, b' and c.

It localises to the plastid. Its subcellular location is the chloroplast thylakoid membrane. The enzyme catalyses ATP + H2O + 4 H(+)(in) = ADP + phosphate + 5 H(+)(out). Functionally, produces ATP from ADP in the presence of a proton gradient across the membrane. The alpha chain is a regulatory subunit. In Phalaenopsis aphrodite subsp. formosana (Moth orchid), this protein is ATP synthase subunit alpha, chloroplastic.